Consider the following 169-residue polypeptide: Peptide deformylase (169 aa).

Fe cation-binding residues include Cys-91 and His-133. Glu-134 is a catalytic residue. Position 137 (His-137) interacts with Fe cation.

Belongs to the polypeptide deformylase family. The cofactor is Fe(2+).

It carries out the reaction N-terminal N-formyl-L-methionyl-[peptide] + H2O = N-terminal L-methionyl-[peptide] + formate. Functionally, removes the formyl group from the N-terminal Met of newly synthesized proteins. Requires at least a dipeptide for an efficient rate of reaction. N-terminal L-methionine is a prerequisite for activity but the enzyme has broad specificity at other positions. This chain is Peptide deformylase, found in Salmonella agona (strain SL483).